The chain runs to 142 residues: Hemoglobin subunit alpha-A (142 aa).

The 141-residue stretch at 2 to 142 (VLSAADKTNV…VGTVLTAKYR (141 aa)) folds into the Globin domain. His59 serves as a coordination point for O2. His88 is a heme b binding site.

It belongs to the globin family. Heterotetramer of two alpha chains and two beta chains. In terms of tissue distribution, red blood cells.

In terms of biological role, involved in oxygen transport from the lung to the various peripheral tissues. The protein is Hemoglobin subunit alpha-A (HBAA) of Coturnix japonica (Japanese quail).